The sequence spans 94 residues: MIKNYRKKFWKNSTTKSQNFIELNDIAYGNLIRVDIEAYRENVIVYRCINLIAQSAGHVPWKVLKSKTGEVIFRLSGALFTNKTESQKSRSGFC.

Belongs to the phage portal family. HK97 subfamily.

This is an uncharacterized protein from Rickettsia conorii (strain ATCC VR-613 / Malish 7).